The sequence spans 357 residues: Mitogen-activated protein kinase kinase SIPKK (357 aa).

In terms of domain architecture, Protein kinase spans 70 to 330; it reads FEAVKVIGKG…ANELMRHPFI (261 aa). ATP-binding positions include 76–84 and Lys99; that span reads IGKGNGGIV. Asp192 serves as the catalytic Proton acceptor.

Belongs to the protein kinase superfamily. STE Ser/Thr protein kinase family. MAP kinase kinase subfamily. In terms of assembly, interacts with SIPK.

The catalysed reaction is L-tyrosyl-[protein] + ATP = O-phospho-L-tyrosyl-[protein] + ADP + H(+). It catalyses the reaction L-seryl-[protein] + ATP = O-phospho-L-seryl-[protein] + ADP + H(+). It carries out the reaction L-threonyl-[protein] + ATP = O-phospho-L-threonyl-[protein] + ADP + H(+). Functionally, phosphorylates myelin basic protein (MBP) in vitro. May be involved in disease resistance. This is Mitogen-activated protein kinase kinase SIPKK from Nicotiana tabacum (Common tobacco).